Consider the following 1070-residue polypeptide: Alpha-glucosidase (1070 aa).

The N-terminal stretch at 1 to 35 (MRSIKAASLTPLLAALFTTLSSTLALPSSVWEHQL) is a signal peptide. 9 N-linked (GlcNAc...) asparagine glycosylation sites follow: N48, N99, N144, N161, N208, N384, N458, N480, and N513. The active-site Nucleophile is D526. The active site involves E529. 5 N-linked (GlcNAc...) asparagine glycosylation sites follow: N544, N566, N574, N578, and N635. The Proton donor role is filled by D730. Residues N818, N885, N916, N983, N992, N996, N1008, N1029, N1043, and N1052 are each glycosylated (N-linked (GlcNAc...) asparagine).

Belongs to the glycosyl hydrolase 31 family.

The enzyme catalyses Hydrolysis of terminal, non-reducing (1-&gt;4)-linked alpha-D-glucose residues with release of alpha-D-glucose.. Its function is as follows. Hydrolyzes a broad range of alpha-D-linked glucopyranosides, including maltose (alpha-1,4), sucrose (alpha-1,2), isomaltose (alpha-1,6) and turanose (alpha-1,3). The polypeptide is Alpha-glucosidase (Candida tsukubaensis (Yeast)).